We begin with the raw amino-acid sequence, 292 residues long: Retinal homeobox protein Rx3 (292 aa).

The tract at residues 1 to 27 (MRLVGSQYKDMEDRLSPSARLVRSPGS) is disordered. The Octapeptide motif motif lies at 32–39 (HSIESILG). Disordered regions lie at residues 53–72 (GSGKTGKDTEHLSPKKDSNK) and 85–107 (SPDLPDADGGKLSDDENPKKKHR). 2 stretches are compositionally biased toward basic and acidic residues: residues 57–72 (TGKDTEHLSPKKDSNK) and 92–102 (DGGKLSDDENP). Residues 106–165 (HRRNRTTFTTFQLHELERAFEKSHYPDVYSREELALKVNLPEVRVQVWFQNRRAKWRRQE) constitute a DNA-binding region (homeobox). The short motif at 272-285 (TSIASLRMKAKEHI) is the OAR element. The short motif at 278–282 (RMKAK) is the Nuclear localization signal element.

Belongs to the paired homeobox family. Bicoid subfamily.

It localises to the nucleus. Plays a critical role in eye formation by regulating the initial specification of retinal cells and/or their subsequent proliferation. The sequence is that of Retinal homeobox protein Rx3 (rx3) from Danio rerio (Zebrafish).